Consider the following 144-residue polypeptide: Small ribosomal subunit protein uS19 (144 aa).

It belongs to the universal ribosomal protein uS19 family.

This chain is Small ribosomal subunit protein uS19 (rps15), found in Dictyostelium discoideum (Social amoeba).